We begin with the raw amino-acid sequence, 880 residues long: DNA polymerase I (880 aa).

The 5'-3' exonuclease domain maps to 174 to 268 (TPEQIIDMKG…SGLEYQGFNR (95 aa)). One can recognise a 3'-5' exonuclease domain in the interval 302–470 (DINVKTVTDV…LREKLVQELE (169 aa)).

Belongs to the DNA polymerase type-A family. In terms of assembly, single-chain monomer with multiple functions.

The enzyme catalyses DNA(n) + a 2'-deoxyribonucleoside 5'-triphosphate = DNA(n+1) + diphosphate. Functionally, in addition to polymerase activity, this DNA polymerase exhibits 3'-5' and 5'-3' exonuclease activity. In Bacillus subtilis (strain 168), this protein is DNA polymerase I (polA).